A 441-amino-acid polypeptide reads, in one-letter code: Probable pyridine nucleotide-disulfide oxidoreductase RclA (441 aa).

Position 33–43 (33–43 (EQSNAMYGGTC)) interacts with FAD. Cysteine 43 and cysteine 48 are oxidised to a cystine. The active-site Proton acceptor is histidine 426.

This sequence belongs to the class-I pyridine nucleotide-disulfide oxidoreductase family. FAD serves as cofactor.

Its function is as follows. Probably involved in reactive chlorine species (RCS) stress resistance. In Escherichia coli (strain K12), this protein is Probable pyridine nucleotide-disulfide oxidoreductase RclA (rclA).